The primary structure comprises 502 residues: Zinc finger C3HC-type protein 1 (502 aa).

A2 carries the N-acetylalanine modification. At S24 the chain carries Phosphoserine. Residue T28 is modified to Phosphothreonine. The interval 35-74 is disordered; it reads LIDEGIAPEEGGVDAQDTSATSQSVNGSPQAEQPSLESTS. A compositionally biased stretch (polar residues) spans 50–72; sequence QDTSATSQSVNGSPQAEQPSLES. Phosphoserine occurs at positions 58 and 62. The residue at position 84 (T84) is a Phosphothreonine. Residues 102–156 form a C3HC-type zinc finger; sequence CAKYGWVTVECDMLKCSSCQAFLCASLQPAFDFDRYKQRCAELKKALCTAHEKFC. A disordered region spans residues 302–423; sequence SSPIPGLEGR…SSRSFFDPTS (122 aa). S321 and S329 each carry phosphoserine. T333 carries the post-translational modification Phosphothreonine. Residues S338, S344, S354, S359, and S370 each carry the phosphoserine modification. The span at 351-360 shows a compositional bias: polar residues; the sequence is RTRSWDSSSP. A compositionally biased stretch (low complexity) spans 371–380; the sequence is PTTRTRPVTR. S381 carries the phosphoserine modification. The residue at position 384 (T384) is a Phosphothreonine. Residue S395 is modified to Phosphoserine. Residues 396–402 carry the Nuclear localization signal motif; that stretch reads PLRKAKR. A phosphoserine mark is found at S407 and S483. Residues 407–422 are compositionally biased toward low complexity; sequence SSSSSDTSSRSFFDPT.

In terms of assembly, interacts with TPR; this interaction mediates ZC3HC1 nuclear envelopes (NE)-association but also required for proper positioning of a substantial amount of TPR at the nuclear basket (NB). In terms of processing, phosphorylated. May also be weakly phosphorylated on Tyr residues.

The protein resides in the nucleus. The protein localises to the nucleus envelope. Required for proper positioning of a substantial amount of TPR at the nuclear basket (NB) through interaction with TPR. The sequence is that of Zinc finger C3HC-type protein 1 (ZC3HC1) from Pongo abelii (Sumatran orangutan).